The sequence spans 196 residues: MGRKDKYALIHYKLMDLSDYIEAGNKARRSIDLNHIEKIGRDIVNVFNSGGKLIVFGNGGSAADSQHFVAELSGHFSKERKALPAMALTVNTSALTAISNDYSYDVVFSRQLEAFAKPGDYVVGISTSGNSVNVVKGLERAKELGCKTLAMTGRSGGKIAKVAEEAIMIDSEVTSIIQEAHIAAIHMICSVIDSYY.

An SIS domain is found at 43-196; it reads IVNVFNSGGK…MICSVIDSYY (154 aa). 58 to 60 contacts substrate; that stretch reads NGG. Zn(2+) contacts are provided by histidine 67 and glutamate 71. Substrate is bound by residues glutamate 71, 100–101, 126–128, serine 131, and glutamine 178; these read ND and STS. Zn(2+) is bound by residues glutamine 178 and histidine 186.

This sequence belongs to the SIS family. GmhA subfamily. Zn(2+) serves as cofactor.

It localises to the cytoplasm. The enzyme catalyses 2 D-sedoheptulose 7-phosphate = D-glycero-alpha-D-manno-heptose 7-phosphate + D-glycero-beta-D-manno-heptose 7-phosphate. It participates in carbohydrate biosynthesis; D-glycero-D-manno-heptose 7-phosphate biosynthesis; D-glycero-alpha-D-manno-heptose 7-phosphate and D-glycero-beta-D-manno-heptose 7-phosphate from sedoheptulose 7-phosphate: step 1/1. In terms of biological role, catalyzes the isomerization of sedoheptulose 7-phosphate in D-glycero-D-manno-heptose 7-phosphate. In Thermoplasma volcanium (strain ATCC 51530 / DSM 4299 / JCM 9571 / NBRC 15438 / GSS1), this protein is Probable phosphoheptose isomerase.